Here is an 828-residue protein sequence, read N- to C-terminus: Hapless 2 (828 aa).

A signal peptide spans Met1–Cys32. Topologically, residues Asp33–Lys680 are extracellular. Cysteines 53 and 62 form a disulfide. Asn74 carries N-linked (GlcNAc...) asparagine glycosylation. Disulfide bonds link Cys142–Cys209, Cys170–Cys381, Cys172–Cys191, and Cys363–Cys388. The cd loop; involved in gamete fusion stretch occupies residues Thr174–Cys191. N-linked (GlcNAc...) asparagine glycans are attached at residues Asn233, Asn250, Asn264, Asn293, and Asn333. N-linked (GlcNAc...) asparagine glycosylation is found at Asn479, Asn516, Asn531, and Asn539. A disulfide bond links Cys546 and Cys592. Residues Phe681–Phe701 traverse the membrane as a helical segment. Residues Leu702–Arg828 lie on the Cytoplasmic side of the membrane. Residues Arg773–Arg828 form a disordered region. The segment covering Ile788–Lys798 has biased composition (basic residues). Residues Gln799–Ala814 show a composition bias toward basic and acidic residues.

Belongs to the HAP2/GCS1 family.

The protein localises to the cell membrane. Its function is as follows. During fertilization, required on male gametes for their fusion with female gametes, and for subsequent ookinete formation in the host. Thereby, required for mosquito-mediated transmission to other animals. Probably initiates the fusion of gamete cell membranes by inserting part of its extracellular domain into the cell membrane of a female gamete. The sequence is that of Hapless 2 from Plasmodium berghei (strain Anka).